The sequence spans 249 residues: 2,3-bisphosphoglycerate-dependent phosphoglycerate mutase 2 (249 aa).

Residues 8–15, 21–22, arginine 60, 87–90, lysine 98, 114–115, and 183–184 each bind substrate; these read RHGESIWN, TG, ERHY, RR, and GN. Histidine 9 (tele-phosphohistidine intermediate) is an active-site residue. The active-site Proton donor/acceptor is glutamate 87.

This sequence belongs to the phosphoglycerate mutase family. BPG-dependent PGAM subfamily. As to quaternary structure, homodimer.

The catalysed reaction is (2R)-2-phosphoglycerate = (2R)-3-phosphoglycerate. Its pathway is carbohydrate degradation; glycolysis; pyruvate from D-glyceraldehyde 3-phosphate: step 3/5. Catalyzes the interconversion of 2-phosphoglycerate and 3-phosphoglycerate. The chain is 2,3-bisphosphoglycerate-dependent phosphoglycerate mutase 2 from Nitrosomonas europaea (strain ATCC 19718 / CIP 103999 / KCTC 2705 / NBRC 14298).